A 592-amino-acid polypeptide reads, in one-letter code: Ferric-chelate reductase 1 (592 aa).

Residues 2-22 traverse the membrane as a helical segment; the sequence is AVSGFTLGTCILLLHISYVAN. Positions 13–179 constitute a Reelin domain; it reads LLLHISYVAN…FTTPKATVVP (167 aa). N-linked (GlcNAc...) asparagine glycans are attached at residues Asn-138, Asn-308, and Asn-321. One can recognise a DOMON domain in the interval 216-331; that stretch reads EASCVFLSFT…TSYYIFLADG (116 aa). The region spanning 335–534 is the Cytochrome b561 domain; it reads DGRIYKHSQQ…VGTEVVLEVH (200 aa). A helical membrane pass occupies residues 372–392; the sequence is VHGALMFVAWMTTVSIGVLVA. Positions 373 and 414 each coordinate heme b. 2 helical membrane passes run 415-435 and 446-466; these read RMLMFTTTVLTCIAFVMPFIY and HPYLGCIVMTLAVLQPLLAVF. Positions 446 and 482 each coordinate heme b. A run of 3 helical transmembrane segments spans residues 491–511, 515–535, and 569–589; these read IIAVAAMFLGMDLPGLNLPDS, YAMTGFVAWHVGTEVVLEVHA, and AVLAIYVCGNVTFLIIFLSAI.

It belongs to the FRRS1 family. The cofactor is heme b.

The protein resides in the membrane. Its function is as follows. Ferric-chelate reductases reduce Fe(3+) to Fe(2+) before its transport from the endosome to the cytoplasm. In Homo sapiens (Human), this protein is Ferric-chelate reductase 1 (FRRS1).